A 214-amino-acid polypeptide reads, in one-letter code: Probable transaldolase (214 aa).

The active-site Schiff-base intermediate with substrate is the Lys-83.

Belongs to the transaldolase family. Type 3B subfamily.

It localises to the cytoplasm. It catalyses the reaction D-sedoheptulose 7-phosphate + D-glyceraldehyde 3-phosphate = D-erythrose 4-phosphate + beta-D-fructose 6-phosphate. It participates in carbohydrate degradation; pentose phosphate pathway; D-glyceraldehyde 3-phosphate and beta-D-fructose 6-phosphate from D-ribose 5-phosphate and D-xylulose 5-phosphate (non-oxidative stage): step 2/3. Transaldolase is important for the balance of metabolites in the pentose-phosphate pathway. The chain is Probable transaldolase from Leptospira interrogans serogroup Icterohaemorrhagiae serovar copenhageni (strain Fiocruz L1-130).